The sequence spans 175 residues: Bacterial proteasome activator (175 aa).

The tract at residues Leu152–Leu175 is disordered. Positions Gln173–Leu175 match the HbYX motif motif.

It belongs to the Bpa family. Forms a homooligomeric, either hexameric or heptameric, ring-like structure which stacks co-axially with the proteasomal alpha-rings.

Functionally, interacts with the core proteasome alpha-subunit (PrcA) through its C-terminal hydrophobic-tyrosine-X motif (HbYX motif). Interaction of Bpa with the proteasome stimulates proteasomal peptidase and casein degradation activity, which suggests Bpa could play a role in the removal of non-native or damaged proteins by influencing the conformation of the proteasome complex upon interaction. The chain is Bacterial proteasome activator from Mycolicibacterium smegmatis (strain ATCC 700084 / mc(2)155) (Mycobacterium smegmatis).